The chain runs to 394 residues: Elongation factor Tu (394 aa).

Positions 10 to 204 (KPHINVGTIG…ALDKYIPEPQ (195 aa)) constitute a tr-type G domain. The interval 19–26 (GHVDHGKT) is G1. A GTP-binding site is contributed by 19-26 (GHVDHGKT). Position 26 (Thr-26) interacts with Mg(2+). The tract at residues 60-64 (GITIN) is G2. The G3 stretch occupies residues 81-84 (DCPG). GTP contacts are provided by residues 81–85 (DCPGH) and 136–139 (NKCD). The G4 stretch occupies residues 136 to 139 (NKCD). The tract at residues 174–176 (SAL) is G5.

It belongs to the TRAFAC class translation factor GTPase superfamily. Classic translation factor GTPase family. EF-Tu/EF-1A subfamily. In terms of assembly, monomer.

It localises to the cytoplasm. The enzyme catalyses GTP + H2O = GDP + phosphate + H(+). Functionally, GTP hydrolase that promotes the GTP-dependent binding of aminoacyl-tRNA to the A-site of ribosomes during protein biosynthesis. The chain is Elongation factor Tu from Hamiltonella defensa subsp. Acyrthosiphon pisum (strain 5AT).